The sequence spans 585 residues: A-type ATP synthase subunit A (585 aa).

The disordered stretch occupies residues 192-211; that stretch reads MRQEWPVREPRPTVEKKTPR. Residues 196 to 211 show a composition bias toward basic and acidic residues; sequence WPVREPRPTVEKKTPR. ATP is bound at residue 237–244; it reads GPFGSGKT.

Belongs to the ATPase alpha/beta chains family. In terms of assembly, has multiple subunits with at least A(3), B(3), C, D, E, F, H, I and proteolipid K(x).

The protein localises to the cell membrane. The catalysed reaction is ATP + H2O + 4 H(+)(in) = ADP + phosphate + 5 H(+)(out). In terms of biological role, component of the A-type ATP synthase that produces ATP from ADP in the presence of a proton gradient across the membrane. The A chain is the catalytic subunit. In Haloquadratum walsbyi (strain DSM 16790 / HBSQ001), this protein is A-type ATP synthase subunit A.